Here is an 83-residue protein sequence, read N- to C-terminus: Large ribosomal subunit protein eL14 (83 aa).

It belongs to the eukaryotic ribosomal protein eL14 family.

The protein is Large ribosomal subunit protein eL14 of Thermococcus gammatolerans (strain DSM 15229 / JCM 11827 / EJ3).